The sequence spans 48 residues: U-reduvitoxin-Pr5a (48 aa).

The N-terminal stretch at 1-19 (MRLFLIFTFIVASLASVYG) is a signal peptide. Disulfide bonds link cysteine 20-cysteine 34, cysteine 27-cysteine 39, and cysteine 33-cysteine 44.

The protein belongs to the venom Ptu1-like knottin family. As to expression, expressed by the venom gland.

The protein localises to the secreted. Binds reversibly and blocks P/Q-type voltage-gated calcium channels (Cav). The chain is U-reduvitoxin-Pr5a from Platymeris rhadamanthus (Red spot assassin bug).